A 199-amino-acid chain; its full sequence is N-(5'-phosphoribosyl)anthranilate isomerase (199 aa).

This sequence belongs to the TrpF family.

It catalyses the reaction N-(5-phospho-beta-D-ribosyl)anthranilate = 1-(2-carboxyphenylamino)-1-deoxy-D-ribulose 5-phosphate. Its pathway is amino-acid biosynthesis; L-tryptophan biosynthesis; L-tryptophan from chorismate: step 3/5. This Streptococcus pneumoniae (strain Hungary19A-6) protein is N-(5'-phosphoribosyl)anthranilate isomerase.